The following is a 352-amino-acid chain: MSQKILFIDRDGTLIEEPKSDFQIDTLEKLRFEKDAIPTLLKLKKFGFKFVMVSNQDGLGTPSFPKENFEIAHEKMLDILKSCGIEFQDIFICPHFENENCACRKPKTAMLEEYIKHELYDKEQSFVIGDRESDMILASNLGVRGLKYGELSWKEIENEILSSFRSASYQRTTKETDIKVKVCLNGGKVSIKTGIDFFDHMLEQIAVHGGIGLEISCKGDLEIDEHHSVEDVALALGACIKKALGDKIGIARYGFALPMDECLASCAMDFCNRPHLVYKAKFKKSHLGALSTEMIEHFFYSLSYAMGVSLHLKVKGKNDHHKAEGLFKAFAKALKMAVKIESENLASSKGVI.

The interval 1-164 (MSQKILFIDR…EIENEILSSF (164 aa)) is histidinol-phosphatase. Catalysis depends on aspartate 9, which acts as the Nucleophile. Aspartate 9 and aspartate 11 together coordinate Mg(2+). Aspartate 11 serves as the catalytic Proton donor. Zn(2+) is bound by residues cysteine 93, histidine 95, cysteine 101, and cysteine 103. Aspartate 130 lines the Mg(2+) pocket. An imidazoleglycerol-phosphate dehydratase region spans residues 165 to 352 (RSASYQRTTK…ENLASSKGVI (188 aa)).

The protein in the N-terminal section; belongs to the histidinol-phosphatase family. This sequence in the C-terminal section; belongs to the imidazoleglycerol-phosphate dehydratase family. The cofactor is Mg(2+). It depends on Zn(2+) as a cofactor.

The protein resides in the cytoplasm. It catalyses the reaction D-erythro-1-(imidazol-4-yl)glycerol 3-phosphate = 3-(imidazol-4-yl)-2-oxopropyl phosphate + H2O. The catalysed reaction is L-histidinol phosphate + H2O = L-histidinol + phosphate. It participates in amino-acid biosynthesis; L-histidine biosynthesis; L-histidine from 5-phospho-alpha-D-ribose 1-diphosphate: step 6/9. The protein operates within amino-acid biosynthesis; L-histidine biosynthesis; L-histidine from 5-phospho-alpha-D-ribose 1-diphosphate: step 8/9. The protein is Histidine biosynthesis bifunctional protein HisB of Campylobacter jejuni subsp. jejuni serotype O:2 (strain ATCC 700819 / NCTC 11168).